Here is a 193-residue protein sequence, read N- to C-terminus: DNA damage-inducible transcript 4-like protein (193 aa).

This sequence belongs to the DDIT4 family.

The protein resides in the cytoplasm. Its function is as follows. Inhibits cell growth by regulating the TOR signaling pathway upstream of the TSC1-TSC2 complex and downstream of AKT1. This Bos taurus (Bovine) protein is DNA damage-inducible transcript 4-like protein (DDIT4L).